Reading from the N-terminus, the 257-residue chain is 4-diphosphocytidyl-2-C-methyl-D-erythritol kinase (257 aa).

Lys-8 is a catalytic residue. Residue 91-101 (PMGGGLGGGSA) participates in ATP binding. Residue Asp-131 is part of the active site.

It belongs to the GHMP kinase family. IspE subfamily.

The catalysed reaction is 4-CDP-2-C-methyl-D-erythritol + ATP = 4-CDP-2-C-methyl-D-erythritol 2-phosphate + ADP + H(+). Its pathway is isoprenoid biosynthesis; isopentenyl diphosphate biosynthesis via DXP pathway; isopentenyl diphosphate from 1-deoxy-D-xylulose 5-phosphate: step 3/6. Its function is as follows. Catalyzes the phosphorylation of the position 2 hydroxy group of 4-diphosphocytidyl-2C-methyl-D-erythritol. This is 4-diphosphocytidyl-2-C-methyl-D-erythritol kinase from Petrotoga mobilis (strain DSM 10674 / SJ95).